Here is a 560-residue protein sequence, read N- to C-terminus: Protein GAT2 (560 aa).

Disordered stretches follow at residues 274–297, 345–383, and 412–461; these read RQQE…FSNK, FLST…ISSS, and LNTK…SDEK. The span at 347-361 shows a compositional bias: low complexity; it reads STSSSSPSPTAGSAP. The segment covering 369-378 has biased composition (basic and acidic residues); it reads RQDDPNDKKM. Residues 414-425 are compositionally biased toward basic residues; that stretch reads TKKKNNRGRPRA. A compositionally biased stretch (polar residues) spans 428–456; that stretch reads RQPTLTTSSHFINNSNPGAAAVSTTTPAA. The GATA-type zinc finger occupies 472 to 497; the sequence is CFHCGETETPEWRKGPYGTRTLCNAC.

This Saccharomyces cerevisiae (strain ATCC 204508 / S288c) (Baker's yeast) protein is Protein GAT2 (GAT2).